The primary structure comprises 248 residues: tRNA (guanine-N(1)-)-methyltransferase (248 aa).

Residues glycine 113 and 133–138 (LGDFVL) contribute to the S-adenosyl-L-methionine site.

This sequence belongs to the RNA methyltransferase TrmD family. As to quaternary structure, homodimer.

It localises to the cytoplasm. The enzyme catalyses guanosine(37) in tRNA + S-adenosyl-L-methionine = N(1)-methylguanosine(37) in tRNA + S-adenosyl-L-homocysteine + H(+). In terms of biological role, specifically methylates guanosine-37 in various tRNAs. The sequence is that of tRNA (guanine-N(1)-)-methyltransferase from Albidiferax ferrireducens (strain ATCC BAA-621 / DSM 15236 / T118) (Rhodoferax ferrireducens).